Consider the following 242-residue polypeptide: Carboxy-S-adenosyl-L-methionine synthase (242 aa).

S-adenosyl-L-methionine contacts are provided by residues Y39, 64–66, 89–90, 117–118, N132, and R199; these read GCS, DN, and DI.

The protein belongs to the class I-like SAM-binding methyltransferase superfamily. Cx-SAM synthase family. Homodimer.

It catalyses the reaction prephenate + S-adenosyl-L-methionine = carboxy-S-adenosyl-L-methionine + 3-phenylpyruvate + H2O. Its function is as follows. Catalyzes the conversion of S-adenosyl-L-methionine (SAM) to carboxy-S-adenosyl-L-methionine (Cx-SAM). The protein is Carboxy-S-adenosyl-L-methionine synthase of Psychromonas ingrahamii (strain DSM 17664 / CCUG 51855 / 37).